A 399-amino-acid polypeptide reads, in one-letter code: Syndecan (399 aa).

Residues Met1–Ala28 form the signal peptide. The segment at Ala28–Gly319 is disordered. Residues Gln29–Ile340 lie on the Extracellular side of the membrane. Over residues Pro36–Ser46 the composition is skewed to low complexity. An O-linked (Xyl...) (glycosaminoglycan) serine glycan is attached at Ser62. The span at Gly67–Asp77 shows a compositional bias: basic and acidic residues. Ser79, Ser81, and Ser110 each carry an O-linked (Xyl...) (glycosaminoglycan) serine glycan. Over residues Ser99–His116 the composition is skewed to polar residues. Over residues Thr117 to Thr172 the composition is skewed to low complexity. N-linked (GlcNAc...) asparagine glycosylation occurs at Asn160. A compositionally biased stretch (acidic residues) spans Thr191–Asp214. Ser194 is a glycosylation site (O-linked (Xyl...) (glycosaminoglycan) serine). Positions Tyr215 to Asp226 are enriched in basic and acidic residues. A compositionally biased stretch (acidic residues) spans Asp253–Ile270. Residues Pro299–Asp309 show a composition bias toward polar residues. Residues Leu341–Arg365 traverse the membrane as a helical segment. Residues Met366–Ala399 are Cytoplasmic-facing. The tract at residues Ser373–Ala399 is disordered. The segment covering Pro383–Ala399 has biased composition (polar residues).

This sequence belongs to the syndecan proteoglycan family. In terms of tissue distribution, in 13-16 hours embryos, expressed in lymph glands, peripheral and central nervous system and basal surfaces of gut epithelia. Sdc and robo are coexpressed in domains adjacent to slit; in tracheal pits and midline glia cells.

It is found in the membrane. Functionally, cell surface proteoglycan that bears heparan sulfate. Required for axonal and myotube guidance, is a necessary component of slit/robo signaling and is required in the slit target cells. The protein is Syndecan (Sdc) of Drosophila melanogaster (Fruit fly).